Consider the following 157-residue polypeptide: Transcriptional repressor NrdR (157 aa).

Residues 1 to 21 are disordered; sequence MKCPNCHKNGSRVVDSRPADN. A zinc finger spans residues 3–34; that stretch reads CPNCHKNGSRVVDSRPADNGHAIRRRRECEQC. The region spanning 49–139 is the ATP-cone domain; it reads LLVIKKNGTR…VYREFKDMHA (91 aa).

The protein belongs to the NrdR family. Requires Zn(2+) as cofactor.

Negatively regulates transcription of bacterial ribonucleotide reductase nrd genes and operons by binding to NrdR-boxes. The sequence is that of Transcriptional repressor NrdR from Ligilactobacillus salivarius (strain UCC118) (Lactobacillus salivarius).